Reading from the N-terminus, the 230-residue chain is Nicotinamide riboside kinase (230 aa).

12-20 contributes to the ATP binding site; the sequence is GASCSGKST. The Mg(2+) site is built by Ser-19 and Asp-38. Asp-38 (proton acceptor) is an active-site residue. Residues 38 to 41 and 56 to 57 each bind substrate; these read DDFY and WD. Residue Arg-153 coordinates ATP. Substrate-binding positions include Arg-154 and 159–160; that span reads GY. Residues 157–159 and 203–205 contribute to the ATP site; these read RTG and RIQ.

It belongs to the uridine kinase family. NRK subfamily.

The catalysed reaction is beta-nicotinamide D-riboside + ATP = beta-nicotinamide D-ribonucleotide + ADP + H(+). It catalyses the reaction beta-D-ribosylnicotinate + ATP = nicotinate beta-D-ribonucleotide + ADP + H(+). Its pathway is cofactor biosynthesis; NAD(+) biosynthesis. Its function is as follows. Catalyzes the phosphorylation of nicotinamide riboside (NR) and nicotinic acid riboside (NaR) to form nicotinamide mononucleotide (NMN) and nicotinic acid mononucleotide (NaMN). The protein is Nicotinamide riboside kinase (nrk1) of Schizosaccharomyces pombe (strain 972 / ATCC 24843) (Fission yeast).